Reading from the N-terminus, the 601-residue chain is ATP-dependent RNA helicase DeaD (601 aa).

Residues Ser-6–Ala-34 carry the Q motif motif. The region spanning Ile-37–Ile-208 is the Helicase ATP-binding domain. An ATP-binding site is contributed by Ala-50 to Thr-57. The DEAD box signature appears at Asp-156 to Asp-159. Residues Lys-231 to Leu-378 form the Helicase C-terminal domain. A compositionally biased stretch (basic and acidic residues) spans Ser-552 to Ser-576. The disordered stretch occupies residues Ser-552 to Val-601.

Belongs to the DEAD box helicase family. DeaD/CsdA subfamily.

Its subcellular location is the cytoplasm. The enzyme catalyses ATP + H2O = ADP + phosphate + H(+). Functionally, DEAD-box RNA helicase involved in various cellular processes at low temperature, including ribosome biogenesis, mRNA degradation and translation initiation. This Buchnera aphidicola subsp. Acyrthosiphon pisum (strain APS) (Acyrthosiphon pisum symbiotic bacterium) protein is ATP-dependent RNA helicase DeaD.